The sequence spans 265 residues: Aquaporin-5 (265 aa).

At 1 to 12 (MKKEVCSLAFLK) the chain is on the cytoplasmic side. Residues 13–33 (AVFAEFLATLIFVFFGLASAL) traverse the membrane as a helical segment. Over 34–39 (KWPSAL) the chain is Extracellular. The helical transmembrane segment at 40-60 (PTILQIALAFGLAIGTLAQAL) threads the bilayer. Residues 61–65 (GPVSG) are Cytoplasmic-facing. The segment at residues 66 to 74 (GHINPAITL) is an intramembrane region (discontinuously helical). The NPA 1 motif lies at 69–71 (NPA). At 75–87 (ALLVGNQISLLRA) the chain is on the cytoplasmic side. A helical membrane pass occupies residues 88-108 (VFYVVAQLVGAIAGAGILYGL). At 109–126 (APGNARGNLAVNSLNNNT) the chain is on the extracellular side. The N-linked (GlcNAc...) asparagine glycan is linked to Asn-124. The chain crosses the membrane as a helical span at residues 127-147 (TPGQAVVVEMILTFQLALCIF). Topologically, residues 148–158 (SSTDSRRTSPV) are cytoplasmic. A helical membrane pass occupies residues 159 to 179 (GSPALSIGLSVTLGHLVGIYF). Position 180 (Thr-180) is a topological domain, extracellular. The segment at residues 181-191 (GCSMNPARSFG) is an intramembrane region (discontinuously helical). Positions 185 to 187 (NPA) match the NPA 2 motif. At 192-203 (PAVVMNRFSPSH) the chain is on the extracellular side. A helical membrane pass occupies residues 204–224 (WVFWVGPIVGAAVAAILYFYL). The Cytoplasmic portion of the chain corresponds to 225 to 265 (LFPNSLSLSERVAVVKGTYESEEDWEEQREERKKTMELTAH).

It belongs to the MIP/aquaporin (TC 1.A.8) family. As to quaternary structure, homotetramer; each monomer provides an independent water pore. Interacts with TRPV4; the interaction is probably indirect and regulates TRPV4 activation by hypotonicity.

The protein localises to the apical cell membrane. Its subcellular location is the cell membrane. It localises to the cytoplasmic vesicle membrane. The catalysed reaction is H2O(in) = H2O(out). Aquaporins form homotetrameric transmembrane channels, with each monomer independently mediating water transport across the plasma membrane along its osmotic gradient. Plays an important role in fluid secretion in salivary glands. Required for TRPV4 activation by hypotonicity. Together with TRPV4, controls regulatory volume decrease in salivary epithelial cells. Seems to play a redundant role in water transport in the eye, lung and in sweat glands. This is Aquaporin-5 from Sus scrofa (Pig).